The primary structure comprises 381 residues: MSSRIARALALVVTLLHLTRLALSTCPAACHCPLEAPKCAPGVGLVRDGCGCCKVCAKQLNEDCSKTQPCDHTKGLECNFGASSTALKGICRAQSEGRPCEYNSRIYQNGESFQPNCKHQCTCIDGAVGCIPLCPQELSLPNLGCPNPRLVKVSGQCCEEWVCDEDSIKDPMEDQDGLLGKELGFDASEVELTRNNELIAVGKGSSLKRLPVFGMEPRILYNPLQGQKCIVQTTSWSQCSKTCGTGISTRVTNDNPECRLVKETRICEVRPCGQPVYSSLKKGKKCSKTKKSPEPVRFTYAGCLSVKKYRPKYCGSCVDGRCCTPQLTRTVKMRFRCEDGETFSKNVMMIQSCKCNYNCPHANEAAFPFYRLFNDIHKFRD.

Residues 1–24 (MSSRIARALALVVTLLHLTRLALS) form the signal peptide. One can recognise an IGFBP N-terminal domain in the interval 25–94 (TCPAACHCPL…TALKGICRAQ (70 aa)). Intrachain disulfides connect cysteine 26–cysteine 50, cysteine 30–cysteine 52, cysteine 32–cysteine 53, cysteine 39–cysteine 56, cysteine 64–cysteine 78, and cysteine 70–cysteine 91. The region spanning 98–164 (RPCEYNSRIY…GQCCEEWVCD (67 aa)) is the VWFC domain. Serine 188 carries the post-translational modification Phosphoserine. One can recognise a TSP type-1 domain in the interval 228–273 (KCIVQTTSWSQCSKTCGTGISTRVTNDNPECRLVKETRICEVRPCG). The heparin-binding stretch occupies residues 279 to 315 (SLKKGKKCSKTKKSPEPVRFTYAGCLSVKKYRPKYCG). Intrachain disulfides connect cysteine 286-cysteine 323, cysteine 303-cysteine 337, cysteine 314-cysteine 353, cysteine 317-cysteine 355, and cysteine 322-cysteine 359. The CTCK domain occupies 286–360 (CSKTKKSPEP…QSCKCNYNCP (75 aa)).

This sequence belongs to the CCN family. As to quaternary structure, interaction with integrins is heparin- and cell-type-dependent and promotes cell adhesion.

The protein resides in the secreted. Promotes cell proliferation, chemotaxis, angiogenesis and cell adhesion. Appears to play a role in wound healing by up-regulating, in skin fibroblasts, the expression of a number of genes involved in angiogenesis, inflammation and matrix remodeling including VEGA-A, VEGA-C, MMP1, MMP3, TIMP1, uPA, PAI-1 and integrins alpha-3 and alpha-5. CCN1-mediated gene regulation is dependent on heparin-binding. Down-regulates the expression of alpha-1 and alpha-2 subunits of collagen type-1. Promotes cell adhesion and adhesive signaling through integrin alpha-6/beta-1, cell migration through integrin alpha-1/beta-5 and cell proliferation through integrin alpha-v/beta-3. The chain is CCN family member 1 (CCN1) from Pan troglodytes (Chimpanzee).